We begin with the raw amino-acid sequence, 669 residues long: Trissin receptor (669 aa).

The segment covering 1–15 (MIMTMMQTVRAWQQE) has biased composition (polar residues). Residues 1–90 (MIMTMMQTVR…PTGQQPPRLP (90 aa)) are disordered. Residues 1–184 (MIMTMMQTVR…EYIFDRTDVR (184 aa)) are Extracellular-facing. Positions 55–74 (NQNNGSPNSSPNQSTSAFRQ) are enriched in low complexity. The N-linked (GlcNAc...) asparagine glycan is linked to Asn66. A compositionally biased stretch (pro residues) spans 79 to 89 (HPPTGQQPPRL). Asn120 and Asn130 each carry an N-linked (GlcNAc...) asparagine glycan. The chain crosses the membrane as a helical span at residues 185–205 (IIFITLYTLVFCCCFFGNLLV). Topologically, residues 206–217 (ILVVTLSRRLRS) are cytoplasmic. Residues 218–238 (ITNFFLANLAFADFCVGLFCV) form a helical membrane-spanning segment. At 239-269 (MQNLSIYLIESWVFGEFLCRMYQFVHSLSYT) the chain is on the extracellular side. Asn241 carries N-linked (GlcNAc...) asparagine glycosylation. An intrachain disulfide couples Cys257 to Cys340. A helical transmembrane segment spans residues 270 to 290 (ASIFILVVICMERYFAIVHPI). The Cytoplasmic segment spans residues 291-302 (TCKQILTAARLR). A helical membrane pass occupies residues 303-323 (MVIVTVWITSAVYSTPKFVFS). Over 324-350 (KTIKNIHTQDGQEEEICVLDREMFNSK) the chain is Extracellular. The chain crosses the membrane as a helical span at residues 351 to 371 (LLDMINFVLLYVMPLLVMTVL). The Cytoplasmic portion of the chain corresponds to 372–552 (YSKIAIALWR…SSNVLRARRG (181 aa)). Low complexity predominate over residues 390-401 (VVQHQHQQPQQP). Disordered regions lie at residues 390 to 481 (VVQH…RGVS) and 515 to 537 (AHHQ…AGAT). Over residues 414–429 (MYHHHPHHHHHHHQHH) the composition is skewed to basic residues. A compositionally biased stretch (gly residues) spans 441-454 (VGVGLGGGGGGGPG). Low complexity predominate over residues 455-470 (PSLASGGSSTTSLSRK). Positions 524–534 (SVGGGSGGAGA) are enriched in gly residues. A helical membrane pass occupies residues 553-573 (VVRMLIIFVLTFALCNLPYHA). The Extracellular segment spans residues 574–595 (RKMWQYWSRSYRGDSNFNALLT). The helical transmembrane segment at 596 to 616 (PLTFLVTYFNSGVNPLLYAFL) threads the bilayer. The Cytoplasmic portion of the chain corresponds to 617–669 (SRNFRKGMKELLLCSWKKGKGKSSSNSSMHHKRKALQTHSLPTDTTHIGNEQL). Residues 635-669 (GKGKSSSNSSMHHKRKALQTHSLPTDTTHIGNEQL) are disordered. Polar residues predominate over residues 653 to 669 (QTHSLPTDTTHIGNEQL).

This sequence belongs to the G-protein coupled receptor 1 family.

It localises to the cell membrane. Functionally, G-protein coupled receptor which is activated by the Trissin peptide in vitro, leading to increased intracellular calcium ion levels. The polypeptide is Trissin receptor (Drosophila melanogaster (Fruit fly)).